Consider the following 946-residue polypeptide: Nonribosomal peptide synthetase pngA (946 aa).

Positions 32-450 (AIASREPTRY…AGREKDSIIV (419 aa)) are adenylation (A) domain. The 80-residue stretch at 580-659 (QPRSGLEQSL…TLSDALKQHA (80 aa)) folds into the Carrier domain. Residue Ser618 is modified to O-(pantetheine 4'-phosphoryl)serine. The tract at residues 681-933 (PIWLVHPVGG…ILDAENIFSF (253 aa)) is thioesterase (TE) domain.

This sequence belongs to the NRP synthetase family.

The enzyme catalyses 2 3-phenylpyruvate + H(+) = phenguignardate + H2O. Functionally, nonribosomal peptide synthetase that mediates the biosynthesis of phenguignardic acid. PngA alone is sufficient for phenguignardic acid synthesis. PngA first activates phenylpyruvic acid (PPA) through its A domain to AMP-PPA. The PPA unit is then loaded to the T domain and eventually transferred to the TE domain. Another PPA unit is then loaded onto the T domain. The TE domain likely promotes the enolate formation on the attached unit, followed by a nucleophilic attack on the carbonyl to yield an ether linkage between the two units. Finally, the TE domain probably catalyzes a similar reaction to give the cyclized dioxolanone core and releases phenguignardic acid. This chain is Nonribosomal peptide synthetase pngA, found in Aspergillus terreus (strain NIH 2624 / FGSC A1156).